Reading from the N-terminus, the 602-residue chain is Arginine--tRNA ligase (602 aa).

The 'HIGH' region signature appears at 124 to 134; it reads ANPTGPVHVGR.

Belongs to the class-I aminoacyl-tRNA synthetase family.

It is found in the cytoplasm. The enzyme catalyses tRNA(Arg) + L-arginine + ATP = L-arginyl-tRNA(Arg) + AMP + diphosphate. This Halorubrum lacusprofundi (strain ATCC 49239 / DSM 5036 / JCM 8891 / ACAM 34) protein is Arginine--tRNA ligase.